The chain runs to 75 residues: Conotoxin ar11a (75 aa).

An N-terminal signal peptide occupies residues 1–19; it reads MKLCATFLLVLVTLPLVTG. Positions 20-36 are excised as a propeptide; that stretch reads EKSSERSLSGAILRGVR. Intrachain disulfides connect Cys-39/Cys-53, Cys-46/Cys-58, Cys-52/Cys-63, and Cys-57/Cys-70.

In terms of tissue distribution, expressed by the venom duct.

Its subcellular location is the secreted. In terms of biological role, both natural (L-Leu form) and synthetic (D-Leu from) peptides equally cause sensitivity to touch and body tremor. Neither L-Leu form nor D-Leu form is active on nerve-muscle preparation. In Conus arenatus (Sand-dusted cone), this protein is Conotoxin ar11a.